The following is a 251-amino-acid chain: Probable transcriptional regulatory protein MMAR_2098 (251 aa).

Belongs to the TACO1 family.

The protein localises to the cytoplasm. The protein is Probable transcriptional regulatory protein MMAR_2098 of Mycobacterium marinum (strain ATCC BAA-535 / M).